Reading from the N-terminus, the 250-residue chain is 2,3-bisphosphoglycerate-dependent phosphoglycerate mutase (250 aa).

Substrate-binding positions include 10–17 (RHGESQWN), 23–24 (TG), R62, 89–92 (ERHY), K100, 116–117 (RR), and 185–186 (GN). H11 functions as the Tele-phosphohistidine intermediate in the catalytic mechanism. Residue E89 is the Proton donor/acceptor of the active site.

This sequence belongs to the phosphoglycerate mutase family. BPG-dependent PGAM subfamily. In terms of assembly, homodimer.

The catalysed reaction is (2R)-2-phosphoglycerate = (2R)-3-phosphoglycerate. Its pathway is carbohydrate degradation; glycolysis; pyruvate from D-glyceraldehyde 3-phosphate: step 3/5. Functionally, catalyzes the interconversion of 2-phosphoglycerate and 3-phosphoglycerate. This Erwinia tasmaniensis (strain DSM 17950 / CFBP 7177 / CIP 109463 / NCPPB 4357 / Et1/99) protein is 2,3-bisphosphoglycerate-dependent phosphoglycerate mutase.